Consider the following 287-residue polypeptide: Putative ABC transporter ATP-binding protein MM_1038 (287 aa).

Residues 5-238 (LENISVFYSR…ENVPLPPVAS (234 aa)) form the ABC transporter domain. Position 40–47 (40–47 (GEKGAGKS)) interacts with ATP.

The protein belongs to the ABC transporter superfamily.

It is found in the cell membrane. In terms of biological role, probably part of an ABC transporter complex. Responsible for energy coupling to the transport system. The sequence is that of Putative ABC transporter ATP-binding protein MM_1038 from Methanosarcina mazei (strain ATCC BAA-159 / DSM 3647 / Goe1 / Go1 / JCM 11833 / OCM 88) (Methanosarcina frisia).